The following is a 46-amino-acid chain: Protein PsbN (46 aa).

Residues 5 to 27 (TLVTLFVSGLLMSFTGYALYTAF) traverse the membrane as a helical segment.

Belongs to the PsbN family.

It is found in the plastid membrane. In terms of biological role, may play a role in photosystem I and II biogenesis. In Cuscuta obtusiflora (Peruvian dodder), this protein is Protein PsbN.